A 341-amino-acid chain; its full sequence is Tetraacyldisaccharide 4'-kinase (341 aa).

ATP is bound at residue Thr-54–Thr-61.

Belongs to the LpxK family.

It carries out the reaction a lipid A disaccharide + ATP = a lipid IVA + ADP + H(+). Its pathway is glycolipid biosynthesis; lipid IV(A) biosynthesis; lipid IV(A) from (3R)-3-hydroxytetradecanoyl-[acyl-carrier-protein] and UDP-N-acetyl-alpha-D-glucosamine: step 6/6. Functionally, transfers the gamma-phosphate of ATP to the 4'-position of a tetraacyldisaccharide 1-phosphate intermediate (termed DS-1-P) to form tetraacyldisaccharide 1,4'-bis-phosphate (lipid IVA). In Brucella suis (strain ATCC 23445 / NCTC 10510), this protein is Tetraacyldisaccharide 4'-kinase.